Consider the following 538-residue polypeptide: Cytochrome P450 monooxygenase cfoH (538 aa).

Residues 24 to 44 traverse the membrane as a helical segment; sequence VLTFFAILLVAILLWYMIPYF. Cysteine 471 is a heme binding site.

Belongs to the cytochrome P450 family. Heme is required as a cofactor.

The protein resides in the membrane. The protein operates within secondary metabolite biosynthesis; flavonoid biosynthesis. In terms of biological role, cytochrome P450 monooxygenase; part of the gene cluster that mediates the biosynthesis of chlorflavonin, a fungal flavonoid with acetolactate synthase inhibitory activity. Within the pathway, cfoH is responsible for the hydroxylation of the flavonoid skeleton at position C2'. The pathway begins with the PKS-NRPS hybrid synthetase cfoA that uses benzoic acid or p-hydroxybenzoic acid as a starter unit with four rounds of chain elongation using malonyl-CoA to form the chalcone skeleton. Then, a new type of chalcone isomerase, cfoK, catalyzes the conversion of the chalcone into a flavanone by a histidine-mediated oxa-Michael addition mechanism. The desaturation of flavanone to flavone is catalyzed by a new type of flavone synthase, the flavin mononucleotide (FMN)-dependent oxidoreductase cfoJ. Monooxygenases cfoF, cfoG, and P450 cfoH are responsible for the hydroxylation of the flavonoid skeleton at sites C3, C8, and C2', respectively. Like cfoF, the dehydratase cfoI plays also a role in the hydroxylation of position C3. Methyltransferases cfoB, cfoC, and cfoD then catalyze the methylation of C7-OH, C8-OH, and C3-OH, respectively. Finally, the monooxygenase cfoE is responsible for the chlorination of flavonoid at position C3'. This is Cytochrome P450 monooxygenase cfoH from Aspergillus candidus.